The following is a 189-amino-acid chain: Protein GrpE (189 aa).

Residues methionine 1 to leucine 13 show a composition bias toward polar residues. The tract at residues methionine 1–asparagine 35 is disordered.

This sequence belongs to the GrpE family. In terms of assembly, homodimer.

Its subcellular location is the cytoplasm. Functionally, participates actively in the response to hyperosmotic and heat shock by preventing the aggregation of stress-denatured proteins, in association with DnaK and GrpE. It is the nucleotide exchange factor for DnaK and may function as a thermosensor. Unfolded proteins bind initially to DnaJ; upon interaction with the DnaJ-bound protein, DnaK hydrolyzes its bound ATP, resulting in the formation of a stable complex. GrpE releases ADP from DnaK; ATP binding to DnaK triggers the release of the substrate protein, thus completing the reaction cycle. Several rounds of ATP-dependent interactions between DnaJ, DnaK and GrpE are required for fully efficient folding. This Polaromonas naphthalenivorans (strain CJ2) protein is Protein GrpE.